We begin with the raw amino-acid sequence, 227 residues long: GFP-like non-fluorescent chromoprotein (227 aa).

A cross-link (5-imidazolinone (Ala-Gly)) is located at residues 63-65 (AYG). The residue at position 64 (Tyr64) is a 2,3-didehydrotyrosine.

This sequence belongs to the GFP family. Homotetramer. In terms of processing, contains a chromophore consisting of modified amino acid residues. The chromophore is formed by autocatalytic backbone condensation between Xaa-N and Gly-(N+2), and oxidation of Tyr-(N+1) to didehydrotyrosine. Maturation of the chromophore requires nothing other than molecular oxygen. The precise stereochemistry of the tyrosine has not been determined.

Non-fluorescent pigment protein that is mauve in color. The wild-type form is non-fluorescent. This is GFP-like non-fluorescent chromoprotein from Condylactis gigantea (Giant Caribbean anemone).